A 215-amino-acid polypeptide reads, in one-letter code: Cytochrome b6 (215 aa).

The chain crosses the membrane as a helical span at residues 32–52 (IFYCLGGITFTCFIIQVATGF). Residue Cys-35 participates in heme c binding. 2 residues coordinate heme b: His-86 and His-100. Helical transmembrane passes span 90 to 110 (ASMMVLMMILHVCRVYLTGGF), 116 to 136 (LTWVTGIILAILTVSFGVTGY), and 186 to 206 (LHTFVLPLLTATFMLGHFLMI). Heme b-binding residues include His-187 and His-202.

This sequence belongs to the cytochrome b family. PetB subfamily. In terms of assembly, the 4 large subunits of the cytochrome b6-f complex are cytochrome b6, subunit IV (17 kDa polypeptide, PetD), cytochrome f and the Rieske protein, while the 4 small subunits are PetG, PetL, PetM and PetN. The complex functions as a dimer. It depends on heme b as a cofactor. The cofactor is heme c.

Its subcellular location is the plastid. The protein resides in the chloroplast thylakoid membrane. Component of the cytochrome b6-f complex, which mediates electron transfer between photosystem II (PSII) and photosystem I (PSI), cyclic electron flow around PSI, and state transitions. This Euglena gracilis protein is Cytochrome b6.